The chain runs to 673 residues: Hemocyanin subunit C (673 aa).

The N-terminal stretch at 1 to 20 (MGAWKVWTFFAIALVVAVKA) is a signal peptide. Residues His207, His211, and His237 each contribute to the Cu cation site. The N-linked (GlcNAc...) asparagine glycan is linked to Asn323. Positions 358, 362, and 398 each coordinate Cu cation. A disulfide bond links Cys568 and Cys616.

Belongs to the tyrosinase family. Hemocyanin subfamily. In terms of assembly, 36-chain polymer consisting of 6 hexamers, each of which includes 4 different chains, A, B, C and D. As to expression, hemolymph.

It is found in the secreted. The protein resides in the extracellular space. Its function is as follows. Hemocyanins are copper-containing oxygen carriers occurring freely dissolved in the hemolymph of many mollusks and arthropods. This chain is Hemocyanin subunit C (HCC), found in Scutigera coleoptrata (House centipede).